The sequence spans 280 residues: 4-deoxy-L-threo-5-hexosulose-uronate ketol-isomerase (280 aa).

Zn(2+)-binding residues include H198, H200, E205, and H247.

It belongs to the KduI family. Zn(2+) serves as cofactor.

The enzyme catalyses 5-dehydro-4-deoxy-D-glucuronate = 3-deoxy-D-glycero-2,5-hexodiulosonate. Its pathway is glycan metabolism; pectin degradation; 2-dehydro-3-deoxy-D-gluconate from pectin: step 4/5. Its function is as follows. Catalyzes the isomerization of 5-dehydro-4-deoxy-D-glucuronate to 3-deoxy-D-glycero-2,5-hexodiulosonate. The chain is 4-deoxy-L-threo-5-hexosulose-uronate ketol-isomerase from Lachnospira eligens (strain ATCC 27750 / DSM 3376 / VPI C15-48 / C15-B4) (Eubacterium eligens).